The following is a 398-amino-acid chain: Ribosomal RNA small subunit methyltransferase B (398 aa).

Residues 221 to 227 (CGGAGLK), Asp242, Asp268, and Asp283 contribute to the S-adenosyl-L-methionine site. The active-site Nucleophile is the Cys336.

This sequence belongs to the class I-like SAM-binding methyltransferase superfamily. RsmB/NOP family.

The protein localises to the cytoplasm. It catalyses the reaction cytidine(967) in 16S rRNA + S-adenosyl-L-methionine = 5-methylcytidine(967) in 16S rRNA + S-adenosyl-L-homocysteine + H(+). Functionally, specifically methylates the cytosine at position 967 (m5C967) of 16S rRNA. This chain is Ribosomal RNA small subunit methyltransferase B, found in Thermus thermophilus (strain ATCC 27634 / DSM 579 / HB8).